The sequence spans 334 residues: Leucine-rich repeat-containing protein 26 (334 aa).

Residues 1-26 form the signal peptide; the sequence is MRGPSWSRPRPLLLLLLLLSPWPVWA. At 27-261 the chain is on the extracellular side; that stretch reads QVSATASPSG…HCAQPLALRD (235 aa). The LRRNT domain maps to 34 to 71; it reads PSGSLGAPDCPEVCTCVPGGLASCSALSLPAVPPGLSL. Disulfide bonds link Cys-43-Cys-49 and Cys-47-Cys-57. LRR repeat units lie at residues 72 to 93, 96 to 117, 120 to 141, 144 to 167, and 168 to 190; these read RLRALLLDHNRVRALPPGAFAG, ALQRLDLRENGLHSVHVRAFWG, ALQLLDLSANQLEALAPGTFAP, ALRNLSLAGNRLARLEPAALGALP, and LLRSLSLQDNELAALAPGLLGRL. Asn-147 carries an N-linked (GlcNAc...) asparagine glycan. Positions 201 to 255 constitute an LRRCT domain; it reads NPWGCGCALRPLCAWLRRHPLPASEAETVLCVWPGRLTLSPLTAFSDAAFSHCAQ. Intrachain disulfides connect Cys-205/Cys-231 and Cys-207/Cys-253. The chain crosses the membrane as a helical span at residues 262-282; that stretch reads LAVVYTLGPASFLVSLASCLA. Topologically, residues 283–334 are cytoplasmic; sequence LGSGLTACRARRRRLRTAALRPPRPPDPNPDPDPHGCASPADPGSPAAAAQA. Positions 298-334 are disordered; it reads RTAALRPPRPPDPNPDPDPHGCASPADPGSPAAAAQA. A compositionally biased stretch (pro residues) spans 304-313; it reads PPRPPDPNPD. Low complexity predominate over residues 320-334; that stretch reads ASPADPGSPAAAAQA.

As to quaternary structure, interacts with KCNMA1. As to expression, isoform 1 is expressed highly in normal prostate and salivary gland, very weakly in colon, pancreas, and intestine, and not at all in other tissues. Isoform 1 is expressed highly in many cancer cell lines and in breast cancer, pancreatic cancer and colon cancer. Isoform 2 is expressed in cancer cell lines.

Its subcellular location is the cell membrane. It is found in the cytoplasm. The protein localises to the cytoskeleton. Auxiliary protein of the large-conductance, voltage and calcium-activated potassium channel (BK alpha). Required for the conversion of BK alpha channels from a high-voltage to a low-voltage activated channel type in non-excitable cells. These are characterized by negative membrane voltages and constant low levels of calcium. The sequence is that of Leucine-rich repeat-containing protein 26 (LRRC26) from Homo sapiens (Human).